The primary structure comprises 370 residues: 3-dehydroquinate synthase (370 aa).

NAD(+) is bound by residues 108–112 (GVIGD), 132–133 (TT), Lys-145, and Lys-154. 3 residues coordinate Zn(2+): Glu-187, His-249, and His-267.

Belongs to the sugar phosphate cyclases superfamily. Dehydroquinate synthase family. The cofactor is Co(2+). Zn(2+) serves as cofactor. Requires NAD(+) as cofactor.

It localises to the cytoplasm. The enzyme catalyses 7-phospho-2-dehydro-3-deoxy-D-arabino-heptonate = 3-dehydroquinate + phosphate. It participates in metabolic intermediate biosynthesis; chorismate biosynthesis; chorismate from D-erythrose 4-phosphate and phosphoenolpyruvate: step 2/7. Catalyzes the conversion of 3-deoxy-D-arabino-heptulosonate 7-phosphate (DAHP) to dehydroquinate (DHQ). The polypeptide is 3-dehydroquinate synthase (Cereibacter sphaeroides (strain KD131 / KCTC 12085) (Rhodobacter sphaeroides)).